The chain runs to 209 residues: BAG family molecular chaperone regulator 1 (209 aa).

A Ubiquitin-like domain is found at 7–84 (CSSVQTIVDI…IIVMGGKNAM (78 aa)). Residues 107–193 (TYDVNLKDVA…TLLNQNDALL (87 aa)) enclose the BAG domain.

In terms of assembly, homodimer or homotetramer.

In terms of biological role, may inhibit the chaperone activity of HSP70/HSC70 by promoting substrate release in an ATP-dependent manner. This is BAG family molecular chaperone regulator 1 (bag-1) from Caenorhabditis briggsae.